A 350-amino-acid chain; its full sequence is Formimidoylglutamase (350 aa).

His130, Asp165, His167, Asp169, Asp269, and Asp271 together coordinate Mn(2+).

Belongs to the arginase family. Mn(2+) serves as cofactor.

The catalysed reaction is N-formimidoyl-L-glutamate + H2O = formamide + L-glutamate. It functions in the pathway amino-acid degradation; L-histidine degradation into L-glutamate; L-glutamate from N-formimidoyl-L-glutamate (hydrolase route): step 1/1. In terms of biological role, catalyzes the conversion of N-formimidoyl-L-glutamate to L-glutamate and formamide. This chain is Formimidoylglutamase, found in Aliivibrio fischeri (strain ATCC 700601 / ES114) (Vibrio fischeri).